We begin with the raw amino-acid sequence, 341 residues long: S-adenosylmethionine:tRNA ribosyltransferase-isomerase (341 aa).

It belongs to the QueA family. As to quaternary structure, monomer.

Its subcellular location is the cytoplasm. It carries out the reaction 7-aminomethyl-7-carbaguanosine(34) in tRNA + S-adenosyl-L-methionine = epoxyqueuosine(34) in tRNA + adenine + L-methionine + 2 H(+). The protein operates within tRNA modification; tRNA-queuosine biosynthesis. Functionally, transfers and isomerizes the ribose moiety from AdoMet to the 7-aminomethyl group of 7-deazaguanine (preQ1-tRNA) to give epoxyqueuosine (oQ-tRNA). The protein is S-adenosylmethionine:tRNA ribosyltransferase-isomerase of Herminiimonas arsenicoxydans.